Consider the following 336-residue polypeptide: Homoserine dehydrogenase (336 aa).

Phe-8 is an NADPH binding site. Residues Ala-10, Ile-11, and Thr-94 each contribute to the NAD(+) site. 3 residues coordinate NADPH: Ile-11, Thr-94, and Lys-123. NADP(+) is bound by residues Ile-11, Thr-94, and Lys-123. Na(+) is bound by residues Glu-147, Val-150, and Gly-152. NADP(+) contacts are provided by Gly-205 and Glu-208. Positions 208 and 219 each coordinate L-homoserine. Residue Lys-223 is the Proton donor of the active site. Gly-315 lines the NADPH pocket. Gly-315 provides a ligand contact to NAD(+). An NADP(+)-binding site is contributed by Gly-315.

The protein belongs to the homoserine dehydrogenase family. Requires a metal cation as cofactor.

The enzyme catalyses L-homoserine + NADP(+) = L-aspartate 4-semialdehyde + NADPH + H(+). The catalysed reaction is L-homoserine + NAD(+) = L-aspartate 4-semialdehyde + NADH + H(+). The protein operates within amino-acid biosynthesis; L-methionine biosynthesis via de novo pathway; L-homoserine from L-aspartate: step 3/3. It functions in the pathway amino-acid biosynthesis; L-threonine biosynthesis; L-threonine from L-aspartate: step 3/5. Its function is as follows. Catalyzes the conversion of L-aspartate-beta-semialdehyde (L-Asa) to L-homoserine (L-Hse), the third step in the biosynthesis of threonine and methionine from aspartate. This chain is Homoserine dehydrogenase (hom), found in Methanocaldococcus jannaschii (strain ATCC 43067 / DSM 2661 / JAL-1 / JCM 10045 / NBRC 100440) (Methanococcus jannaschii).